A 222-amino-acid chain; its full sequence is MCPPRGLLLVAILVLLNHLDHLSLARNLPTATPGPGMFQCLNHSQNLLRTVSNTLQKARQTLEFYSCTSEEIDHEDITKDKSSTVAACLPLELAPNESCLASREISFITNGSCLTPGKASSMMTLCLSSIYEDLKMYQVEFKAMNAKLLIDPQRQIFLDENMLTAIDKLMQALNFNSETVPQKPSLEGLDFYKTKVKLCILLHAFRIRAVTINRMMGYLNAS.

The signal sequence occupies residues 1–25; that stretch reads MCPPRGLLLVAILVLLNHLDHLSLA. 3 disulfides stabilise this stretch: Cys-40/Cys-113, Cys-67/Cys-199, and Cys-88/Cys-126. Asn-42, Asn-96, and Asn-110 each carry an N-linked (GlcNAc...) asparagine glycan.

It belongs to the IL-6 superfamily. In terms of assembly, heterodimer with IL12B; disulfide-linked. This heterodimer is known as interleukin IL-12. Heterodimer with EBI3/IL27B; not disulfide-linked. This heterodimer is known as interleukin IL-35. Interacts with NBR1; this interaction promotes IL-12 secretion.

It is found in the secreted. Heterodimerizes with IL12B to form the IL-12 cytokine or with EBI3/IL27B to form the IL-35 cytokine. IL-12 is primarily produced by professional antigen-presenting cells (APCs) such as B-cells and dendritic cells (DCs) as well as macrophages and granulocytes and regulates T-cell and natural killer-cell responses, induces the production of interferon-gamma (IFN-gamma), favors the differentiation of T-helper 1 (Th1) cells and is an important link between innate resistance and adaptive immunity. Mechanistically, exerts its biological effects through a receptor composed of IL12R1 and IL12R2 subunits. Binding to the receptor results in the rapid tyrosine phosphorylation of a number of cellular substrates including the JAK family kinases TYK2 and JAK2. In turn, recruited STAT4 gets phosphorylated and translocates to the nucleus where it regulates cytokine/growth factor responsive genes. As part of IL-35, plays essential roles in maintaining the immune homeostasis of the liver microenvironment and also functions as an immune-suppressive cytokine. Mediates biological events through unconventional receptors composed of IL12RB2 and gp130/IL6ST heterodimers or homodimers. Signaling requires the transcription factors STAT1 and STAT4, which form a unique heterodimer that binds to distinct DNA sites. The chain is Interleukin-12 subunit alpha (IL12A) from Equus caballus (Horse).